A 219-amino-acid polypeptide reads, in one-letter code: MLLFRAASLLPLLCFTVGAFPFMDEEGSGSFAQEVLHSRSYPLANAHRGPFVDLPLFRQNRRKISQNFILHSDPREHMDEEALRRKLVWESAIRREKMRSHPDQVLPIGQDALKRSRCHALPFIQNVFRKNCFPVRLPNKFCFGQCNSFYVPGWPAGLSQPCTSCAPSRSRRISLPLRCRAGHLAWQEVELVEECECETRYDRNTVEPAGSGEGFLPVS.

An N-terminal signal peptide occupies residues 1-19; it reads MLLFRAASLLPLLCFTVGA. Disulfide bonds link Cys118–Cys165, Cys132–Cys179, Cys142–Cys195, and Cys146–Cys197. A CTCK domain is found at 118 to 198; it reads CHALPFIQNV…VELVEECECE (81 aa).

This sequence belongs to the DAN family. As to quaternary structure, interacts with nr1-a.

The protein localises to the secreted. Plays an important role in regulating the left-right axis by blocking a tgfb1 cascade in the right posterior paraxial mesoderm. Functions as an inhibitor of bmp, tgfb1, nodal, activin and wnt signaling in the ectoderm. May inhibit mesodermal signals, probably through an inhibition of nodal/activin pathways. Seems to regulates cell fate specification and competence before the onset of neural induction. Expression in the entire ectodermal region prior to gastrulation might act to prevent fate specification in the ectoderm and ensure the maintenance of the stem-cell-like properties exhibited by ectodermal cells. This Xenopus tropicalis (Western clawed frog) protein is DAN domain family member 5 (dand5).